We begin with the raw amino-acid sequence, 312 residues long: Small ribosomal subunit protein uS2 (312 aa).

Residues 232-312 (RASGAAERDE…AAPEGEAAAE (81 aa)) are disordered. Over residues 245-284 (REGRDDRGDRRDDRRGPRRGDRRDDRRDRGGDRGGDRRGP) the composition is skewed to basic and acidic residues. Low complexity predominate over residues 291–312 (AAPVASAEPAAEAAPEGEAAAE).

It belongs to the universal ribosomal protein uS2 family.

This is Small ribosomal subunit protein uS2 from Myxococcus xanthus (strain DK1622).